The primary structure comprises 483 residues: MSLQAPPRLLELAEQSLLRDRALAIPTLEELPRELFPPLFMEAFTRRCCETLTTMVQAWPFTCLPLGSLMKSCNLEIFRAVLEGLDALLAQKVRPRRWKLQVLDLRNVDENFWGIWSGASALSPEALSKRRTAGNCPRPGGQQPLMVILDLCFKNGTLDECLTHFLEWGKQRKGLLHVCCKELQIFGIAIHRIIEVLNTVELDCIQEVEVCCPWELSILIRFAPYLGQMRNLRKLVLFNIHVSACIPLDRKEQFVIQFTSQFLKLDYFQKLYMHSVSFLEGHLDQLLRCLQAPLETVVMTECLLSESDLKHLSWCPSIRQLKELDLRGITLTHFSPEPLSVLLEQAEATLQTLDLEDCGIVDSQLSAILPALSRCSQLSTFSFCGNLISMAALENLLRHTVGLSKLSLELYPAPLESYDAQGALCWGRFSQLGAELMKTLRDLRQPKIIVFSTVPCPRCGIRASYDLEPSHCLLNACCQGGFI.

The LRR 1; degenerate repeat unit spans residues 97–122; the sequence is RWKLQVLDLRNVDENFWGIWSGASAL. One copy of the LRR 2; degenerate repeat lies at 177–201; it reads HVCCKELQIFGIAIHRIIEVLNTVE. The stretch at 202 to 228 is one LRR 3; degenerate repeat; it reads LDCIQEVEVCCPWELSILIRFAPYLGQ. The stretch at 229–264 is one LRR 4; degenerate repeat; sequence MRNLRKLVLFNIHVSACIPLDRKEQFVIQFTSQFLK. LRR repeat units lie at residues 265-290, 291-322, 323-341, 347-374, and 375-399; these read LDYF…LRCL, QAPL…RQLK, ELDL…PLSV, EATL…ALSR, and CSQL…LLRH.

The protein belongs to the PRAME family.

The sequence is that of PRAME family member 12 from Homo sapiens (Human).